Here is a 518-residue protein sequence, read N- to C-terminus: Cytochrome P450 monooxygenase ARMGADRAFT_1018417 (518 aa).

A helical membrane pass occupies residues 3–23 (LFSAYALAFSLLMIPLILYIL). Position 433 (Cys-433) interacts with heme. Asn-455 carries N-linked (GlcNAc...) asparagine glycosylation.

It belongs to the cytochrome P450 family. The cofactor is heme.

Its subcellular location is the membrane. Its pathway is secondary metabolite biosynthesis. Its function is as follows. Cytochrome P450 monooxygenase, part of the gene cluster that mediates the biosynthesis of melleolides, a range of antifungal and phytotoxic polyketide derivatives composed of an orsellinic acid (OA) moiety esterified to various sesquiterpene alcohols. The first step in melleolides biosynthesis is performed by the delta(6)-protoilludene synthase PRO1 which catalyzes the cyclization of farnesyl diphosphate to protoilludene. The orsellinic acid synthase armB produces OA by condensing acetyl-CoA with 3 malonyl-CoA units in a three-round chain elongation reaction folowed by a C2-C7 ring closure. ArmB further catalyzes the trans-esterification of OA to the various sesquiterpene alcohols resulting from the hydroxylation of protoilludene. The melleolides cluster also includes 5 cytochrome P450 monooxygenases, 4 NAD(+)-dependent oxidoreductases, one flavin-dependent oxidoreductase, and one O-methyltransferase. The cytochrome P450 monooxygenases may be involved in protoilludene hydroxylation to elaborate melleolides with multiple alcohol groups, such as melleolide D, which carries alcohol functionalities at C-4, C-5, C-10, and C-13. The role of the NAD(+)-dependent enzymes remains unknown. Numerous melleolides, including arnamial, show 5'-O-methylation of the aromatic moiety which may be catalyzed by the methyltransferase encoded in the cluster. The flavin-dependent oxidoreductase might represent the dehydrogenase yielding the aldehyde in position 1 of arnamial and other melleolides. Finally, several halogenase localized outside of the cluster, are able to catalyze the transfer of a single chlorine atom to the melleolide backbone, resulting in a 6'-chloromelleolide product. This Armillaria gallica (Bulbous honey fungus) protein is Cytochrome P450 monooxygenase ARMGADRAFT_1018417.